The following is a 349-amino-acid chain: tRNA pseudouridine synthase D (349 aa).

Residue phenylalanine 27 participates in substrate binding. The active-site Nucleophile is aspartate 80. Asparagine 129 provides a ligand contact to substrate. Residues 155–303 (GVPNYFGAQR…VEAARRAMLL (149 aa)) form the TRUD domain. Substrate is bound at residue phenylalanine 329.

The protein belongs to the pseudouridine synthase TruD family.

It catalyses the reaction uridine(13) in tRNA = pseudouridine(13) in tRNA. Functionally, responsible for synthesis of pseudouridine from uracil-13 in transfer RNAs. This Escherichia coli O127:H6 (strain E2348/69 / EPEC) protein is tRNA pseudouridine synthase D.